Here is a 505-residue protein sequence, read N- to C-terminus: Putative thymidine phosphorylase (505 aa).

The protein belongs to the thymidine/pyrimidine-nucleoside phosphorylase family. Type 2 subfamily.

It carries out the reaction thymidine + phosphate = 2-deoxy-alpha-D-ribose 1-phosphate + thymine. The sequence is that of Putative thymidine phosphorylase from Tolumonas auensis (strain DSM 9187 / NBRC 110442 / TA 4).